The sequence spans 485 residues: TSSTARKTPEKDSLKQDQNQLLKTPIQTNGNQQSTFDSGEDSHSMPDSDLLEPVITDGADVDDENDAEEDDDIRTPKINSHGKMKTYKCKQCDFIAVTKLSFWEHNRIHIKPEKMLKCQKCPFITEYKHHLEYHLRNHNGSKPFQCKQCNYSCVNKSMLNSHMKSHSNIYQYRCKDCNYATKYCHSLKLHLRKYSHNPPMVLNYDGTPNPLRIIDVYGTRRGPKVKFHKDEGGHNLLNSNINTSRRSKSGKRDSFPNFEQSQHVPTPPSSQALAMLPNLANIFQQSPSMPLFPYLNLNFHHILAQQKAALSQISPSINGWQNEENCNEEETPEKEEDPKRMSALDLSSNPSTPSTVSQVKHKRKGRAFKLELMKESSDDDEGQTIRTLGEIRSELETPKPVQLQLPTSSTTTPLKTTSEDDSTSVEPLQNLYECKFCDISFKHAVLYTIHMGYHGYNDVFKCNACGKKCEDRVAFFLHIARDAHA.

Positions 1 to 77 (TSSTARKTPE…EEDDDIRTPK (77 aa)) are disordered. Over residues 16 to 37 (QDQNQLLKTPIQTNGNQQSTFD) the composition is skewed to polar residues. Residues 59–72 (ADVDDENDAEEDDD) are compositionally biased toward acidic residues. 4 consecutive C2H2-type zinc fingers follow at residues 87-109 (YKCK…NRIH), 116-138 (LKCQ…LRNH), 144-166 (FQCK…MKSH), and 172-196 (YRCK…KYSH). Disordered stretches follow at residues 229-270 (KDEG…PPSS), 318-361 (NGWQ…QVKH), and 398-422 (PKPV…EDDS). Positions 257 to 270 (NFEQSQHVPTPPSS) are enriched in polar residues. Acidic residues predominate over residues 325 to 335 (NCNEEETPEKE). Positions 345-358 (DLSSNPSTPSTVSQ) are enriched in polar residues. Low complexity predominate over residues 402–416 (QLQLPTSSTTTPLKT). 2 consecutive C2H2-type zinc fingers follow at residues 432–454 (YECK…MGYH) and 460–484 (FKCN…RDAH).

The protein belongs to the hunchback C2H2-type zinc-finger protein family.

The protein localises to the nucleus. Functionally, gap class segmentation protein that controls development of head structures. This Clogmia albipunctata (Mothmidge) protein is Protein hunchback (hb).